A 479-amino-acid chain; its full sequence is tRNA modification GTPase MnmE (479 aa).

The (6S)-5-formyl-5,6,7,8-tetrahydrofolate site is built by Arg-30, Glu-91, and Lys-130. Residues 226-402 (GFRIVLTGLP…VLKDLVKEFA (177 aa)) enclose the TrmE-type G domain. Position 236 (Asn-236) interacts with K(+). GTP is bound by residues 236-241 (NVGKSS), 255-261 (TDIPGTT), and 280-283 (DTAG). Position 240 (Ser-240) interacts with Mg(2+). Positions 255, 257, and 260 each coordinate K(+). Thr-261 is a Mg(2+) binding site. Lys-479 lines the (6S)-5-formyl-5,6,7,8-tetrahydrofolate pocket.

The protein belongs to the TRAFAC class TrmE-Era-EngA-EngB-Septin-like GTPase superfamily. TrmE GTPase family. As to quaternary structure, homodimer. Heterotetramer of two MnmE and two MnmG subunits. Requires K(+) as cofactor.

The protein resides in the cytoplasm. Exhibits a very high intrinsic GTPase hydrolysis rate. Involved in the addition of a carboxymethylaminomethyl (cmnm) group at the wobble position (U34) of certain tRNAs, forming tRNA-cmnm(5)s(2)U34. This is tRNA modification GTPase MnmE from Bdellovibrio bacteriovorus (strain ATCC 15356 / DSM 50701 / NCIMB 9529 / HD100).